An 800-amino-acid polypeptide reads, in one-letter code: Phenylalanine--tRNA ligase beta subunit (800 aa).

Positions G38 to G147 constitute a tRNA-binding domain. In terms of domain architecture, B5 spans V401–E477. The Mg(2+) site is built by D455, D461, E464, and E465. An FDX-ACB domain is found at P708–R799.

The protein belongs to the phenylalanyl-tRNA synthetase beta subunit family. Type 1 subfamily. Tetramer of two alpha and two beta subunits. Requires Mg(2+) as cofactor.

It is found in the cytoplasm. The enzyme catalyses tRNA(Phe) + L-phenylalanine + ATP = L-phenylalanyl-tRNA(Phe) + AMP + diphosphate + H(+). In Anaeromyxobacter dehalogenans (strain 2CP-C), this protein is Phenylalanine--tRNA ligase beta subunit.